The sequence spans 386 residues: MKKLFNQVLVAAGVLALLAGCASEEENVIMAPLPIVKSEFTPKTLWSASVGDGVGHYFSKLAPDYAYDKVFVASRDGVVKALDPQNGKVIWTTDLEIEGSARLSGGITAAFGKLFIGSENGVVNALDAETGEPLWASAIEGEVLAAPAADNNIVIVNTSRGALIALNQEDGAQKWTISTEVPNLTLRGDSRPTAVAGGVFWGTPSGRLAAAIAERGQLIWQQPVGQPKGATEIDRLVDVDASPLVIGGTLFTVGFNGQLIAIDLRSGQPIWKRNYSSATDMATDGSRLYLVTDKDHLVAVDTRSGTELWSNTQLEHRLLTAPKMIDDYLVVGDAEGYLHWIDRNSGEFIAQQLVNDSGFAVGPLALNDGYVIVTRNGQIKKLTIQQ.

Positions 1–20 are cleaved as a signal peptide; sequence MKKLFNQVLVAAGVLALLAG. A lipid anchor (N-palmitoyl cysteine) is attached at Cys21. A lipid anchor (S-diacylglycerol cysteine) is attached at Cys21.

Belongs to the BamB family. As to quaternary structure, part of the Bam complex.

It localises to the cell outer membrane. Functionally, part of the outer membrane protein assembly complex, which is involved in assembly and insertion of beta-barrel proteins into the outer membrane. The protein is Outer membrane protein assembly factor BamB of Vibrio cholerae serotype O1 (strain ATCC 39315 / El Tor Inaba N16961).